A 223-amino-acid chain; its full sequence is UPF0502 protein Sde_2426 (223 aa).

The protein belongs to the UPF0502 family.

The protein is UPF0502 protein Sde_2426 of Saccharophagus degradans (strain 2-40 / ATCC 43961 / DSM 17024).